The chain runs to 149 residues: NADH-ubiquinone oxidoreductase chain 6 (149 aa).

The next 4 helical transmembrane spans lie at 23–43 (ILMLSSLILLTLFLSLIFYFI), 51–71 (MMMILIILGGMLIIFMYMISL), 83–103 (LSVTFTMMLILIPYDSFMTKL), and 114–134 (VNFVNMIILMMIFLIVMLTII).

Belongs to the complex I subunit 6 family.

The protein resides in the mitochondrion membrane. It catalyses the reaction a ubiquinone + NADH + 5 H(+)(in) = a ubiquinol + NAD(+) + 4 H(+)(out). Its function is as follows. Core subunit of the mitochondrial membrane respiratory chain NADH dehydrogenase (Complex I) that is believed to belong to the minimal assembly required for catalysis. Complex I functions in the transfer of electrons from NADH to the respiratory chain. The immediate electron acceptor for the enzyme is believed to be ubiquinone. The protein is NADH-ubiquinone oxidoreductase chain 6 (ND6) of Rhipicephalus sanguineus (Brown dog tick).